Reading from the N-terminus, the 95-residue chain is Aspartyl/glutamyl-tRNA(Asn/Gln) amidotransferase subunit C (95 aa).

The protein belongs to the GatC family. In terms of assembly, heterotrimer of A, B and C subunits.

The enzyme catalyses L-glutamyl-tRNA(Gln) + L-glutamine + ATP + H2O = L-glutaminyl-tRNA(Gln) + L-glutamate + ADP + phosphate + H(+). It carries out the reaction L-aspartyl-tRNA(Asn) + L-glutamine + ATP + H2O = L-asparaginyl-tRNA(Asn) + L-glutamate + ADP + phosphate + 2 H(+). Functionally, allows the formation of correctly charged Asn-tRNA(Asn) or Gln-tRNA(Gln) through the transamidation of misacylated Asp-tRNA(Asn) or Glu-tRNA(Gln) in organisms which lack either or both of asparaginyl-tRNA or glutaminyl-tRNA synthetases. The reaction takes place in the presence of glutamine and ATP through an activated phospho-Asp-tRNA(Asn) or phospho-Glu-tRNA(Gln). This chain is Aspartyl/glutamyl-tRNA(Asn/Gln) amidotransferase subunit C, found in Rhizobium leguminosarum bv. trifolii (strain WSM2304).